The sequence spans 997 residues: Sorting nexin-19 (997 aa).

In terms of domain architecture, PXA spans 95 to 273; the sequence is ERQLEQEINR…ILVSIFSKYR (179 aa). Disordered regions lie at residues 313-333 and 413-437; these read SSPA…SPEI and GALE…APGT. Residues 422-435 are compositionally biased toward acidic residues; sequence GSECMEGAEAEEAP. Residues 538-668 enclose the PX domain; that stretch reads LRITGTITAR…EFLALNTDAR (131 aa). R587 and R634 together coordinate a 1,2-diacyl-sn-glycero-3-phospho-(1D-myo-inositol-3-phosphate). Residues 697 to 728 form a disordered region; it reads FPRSEPQSPTEELSEAENESKPQTEGKKASKS. Basic and acidic residues predominate over residues 714-724; it reads NESKPQTEGKK.

The protein belongs to the sorting nexin family. In terms of assembly, interacts with PTPRN.

It localises to the early endosome membrane. The protein resides in the cytoplasmic vesicle membrane. Plays a role in intracellular vesicle trafficking and exocytosis. May play a role in maintaining insulin-containing dense core vesicles in pancreatic beta-cells and in preventing their degradation. May play a role in insulin secretion. Interacts with membranes containing phosphatidylinositol 3-phosphate (PtdIns(3P)). The polypeptide is Sorting nexin-19 (Mus musculus (Mouse)).